A 146-amino-acid chain; its full sequence is MSTFNAETADNLEDIEKQFAVVAVEQAETYWKLLTSVPGSKLRLTKFDDEIYENFMERFPEYKDVERVKKFTEEELKTKEAKERWRKFFTIFEKKIEDYNFGTLLRTDASAEYGQFTTCFVVRLQFYAFEIARNKHGLNDWIVGQK.

It belongs to the PBDC1 family.

It localises to the cytoplasm. This Saccharomyces cerevisiae (strain ATCC 204508 / S288c) (Baker's yeast) protein is Protein PBDC1 homolog.